We begin with the raw amino-acid sequence, 530 residues long: Lanosterol 14-alpha demethylase CYP51 (530 aa).

The Lumenal segment spans residues M1 to S20. The helical transmembrane segment at H21–Y41 threads the bilayer. The Cytoplasmic segment spans residues N42–I530. A Glycyl lysine isopeptide (Lys-Gly) (interchain with G-Cter in ubiquitin) cross-link involves residue K116. Y126 is a lanosterol binding site. Itraconazole is bound at residue G314. Glycyl lysine isopeptide (Lys-Gly) (interchain with G-Cter in ubiquitin) cross-links involve residues K353 and K454. S458 is subject to Phosphoserine. C470 lines the heme pocket.

This sequence belongs to the cytochrome P450 family. Interacts with ERG28. It depends on heme as a cofactor.

The protein resides in the endoplasmic reticulum membrane. It catalyses the reaction a 14alpha-methyl steroid + 3 reduced [NADPH--hemoprotein reductase] + 3 O2 = a Delta(14) steroid + formate + 3 oxidized [NADPH--hemoprotein reductase] + 4 H2O + 4 H(+). The enzyme catalyses a 14alpha-methyl steroid + reduced [NADPH--hemoprotein reductase] + O2 = a 14alpha-hydroxymethyl steroid + oxidized [NADPH--hemoprotein reductase] + H2O + H(+). The catalysed reaction is a 14alpha-hydroxymethyl steroid + reduced [NADPH--hemoprotein reductase] + O2 = a 14alpha-formyl steroid + oxidized [NADPH--hemoprotein reductase] + 2 H2O + H(+). It carries out the reaction a 14alpha-formyl steroid + reduced [NADPH--hemoprotein reductase] + O2 = a Delta(14) steroid + formate + oxidized [NADPH--hemoprotein reductase] + H2O + 2 H(+). It catalyses the reaction lanosterol + 3 reduced [NADPH--hemoprotein reductase] + 3 O2 = 4,4-dimethyl-5alpha-cholesta-8,14,24-trien-3beta-ol + formate + 3 oxidized [NADPH--hemoprotein reductase] + 4 H2O + 4 H(+). The enzyme catalyses lanosterol + reduced [NADPH--hemoprotein reductase] + O2 = 32-hydroxylanosterol + oxidized [NADPH--hemoprotein reductase] + H2O + H(+). The catalysed reaction is 32-hydroxylanosterol + reduced [NADPH--hemoprotein reductase] + O2 = 32-oxolanosterol + oxidized [NADPH--hemoprotein reductase] + 2 H2O + H(+). It carries out the reaction 32-oxolanosterol + reduced [NADPH--hemoprotein reductase] + O2 = 4,4-dimethyl-5alpha-cholesta-8,14,24-trien-3beta-ol + formate + oxidized [NADPH--hemoprotein reductase] + H2O + 2 H(+). The protein operates within steroid biosynthesis; zymosterol biosynthesis; zymosterol from lanosterol: step 1/6. Functionally, sterol 14alpha-demethylase that plays a critical role in the third module of ergosterol biosynthesis pathway, being ergosterol the major sterol component in fungal membranes that participates in a variety of functions. The third module or late pathway involves the ergosterol synthesis itself through consecutive reactions that mainly occur in the endoplasmic reticulum (ER) membrane. Starting from lanosterol (lanosta-8,24-dien-3beta-ol), it catalyzes the three-step oxidative removal of the 14alpha-methyl group (C-32) of the sterol in the form of formate, and converts the sterol to 4,4-dimethyl-5alpha-cholesta-8,14,24-trien-3beta-ol, which is critical for ergosterol biosynthesis. Can demethylate substrates not intrinsic to yeast, such as eburicol (24-methylene-24,25-dihydrolanosterol) at a similar rate to lanosterol, and at a lower rate the 24,25-dihydrolanosterol (DHL) to 4,4-dimethyl-8,14-cholestadien-3beta-ol. This chain is Lanosterol 14-alpha demethylase CYP51, found in Saccharomyces cerevisiae (strain ATCC 204508 / S288c) (Baker's yeast).